We begin with the raw amino-acid sequence, 163 residues long: Peptide methionine sulfoxide reductase MsrA (163 aa).

C10 is a catalytic residue.

It belongs to the MsrA Met sulfoxide reductase family.

The catalysed reaction is L-methionyl-[protein] + [thioredoxin]-disulfide + H2O = L-methionyl-(S)-S-oxide-[protein] + [thioredoxin]-dithiol. It carries out the reaction [thioredoxin]-disulfide + L-methionine + H2O = L-methionine (S)-S-oxide + [thioredoxin]-dithiol. Has an important function as a repair enzyme for proteins that have been inactivated by oxidation. Catalyzes the reversible oxidation-reduction of methionine sulfoxide in proteins to methionine. This is Peptide methionine sulfoxide reductase MsrA from Ruthia magnifica subsp. Calyptogena magnifica.